The primary structure comprises 1014 residues: Regulator of telomere elongation helicase 1 homolog (1014 aa).

The region spanning 7–308 is the Helicase ATP-binding domain; it reads RGVDVDFPYD…NSADKQFDPE (302 aa). Position 42 to 49 (42 to 49) interacts with ATP; it reads SPTGTGKT. Residues 70 to 85 show a composition bias toward gly residues; the sequence is GGGGGGGGGGGGGGGS. Residues 70–106 are disordered; sequence GGGGGGGGGGGGGGGSQQPPYGSQPSGSQHSGGSASQ. Low complexity predominate over residues 86-106; that stretch reads QQPPYGSQPSGSQHSGGSASQ. Positions 149, 170, 175, and 211 each coordinate [4Fe-4S] cluster. The short motif at 255 to 258 is the DEAH box element; it reads DEAH. Residues 906–930 form a disordered region; that stretch reads SSKKSNITHAPGNSGAIHEKSGGQE.

The protein belongs to the helicase family. RAD3/XPD subfamily.

The protein localises to the nucleus. The catalysed reaction is ATP + H2O = ADP + phosphate + H(+). A probable ATP-dependent DNA helicase implicated in DNA replication, DNA repair and the maintenance of genomic stability. Acts as an anti-recombinase to counteract toxic recombination and limit crossover during meiosis. Regulates meiotic recombination and crossover homeostasis by physically dissociating strand invasion events and thereby promotes noncrossover repair by meiotic synthesis dependent strand annealing (SDSA) as well as disassembly of D loop recombination intermediates. The sequence is that of Regulator of telomere elongation helicase 1 homolog from Oryza sativa subsp. japonica (Rice).